Consider the following 227-residue polypeptide: Cytochrome c oxidase subunit 2 (227 aa).

At 1-14 (MAYPFQLGFQDATS) the chain is on the mitochondrial intermembrane side. A helical transmembrane segment spans residues 15 to 45 (PIMEELLHFHDHTLMIVFLISSLVLYIISSM). The Mitochondrial matrix segment spans residues 46–59 (LTTKLTHTSTMDAQ). Residues 60–87 (EVETIWTILPAIILILIALPSLRILYMM) traverse the membrane as a helical segment. The Mitochondrial intermembrane segment spans residues 88–227 (DEINNPSLTV…YFEEWSASML (140 aa)). Positions 161, 196, 198, 200, 204, and 207 each coordinate Cu cation. A Mg(2+)-binding site is contributed by glutamate 198.

It belongs to the cytochrome c oxidase subunit 2 family. In terms of assembly, component of the cytochrome c oxidase (complex IV, CIV), a multisubunit enzyme composed of 14 subunits. The complex is composed of a catalytic core of 3 subunits MT-CO1, MT-CO2 and MT-CO3, encoded in the mitochondrial DNA, and 11 supernumerary subunits COX4I, COX5A, COX5B, COX6A, COX6B, COX6C, COX7A, COX7B, COX7C, COX8 and NDUFA4, which are encoded in the nuclear genome. The complex exists as a monomer or a dimer and forms supercomplexes (SCs) in the inner mitochondrial membrane with NADH-ubiquinone oxidoreductase (complex I, CI) and ubiquinol-cytochrome c oxidoreductase (cytochrome b-c1 complex, complex III, CIII), resulting in different assemblies (supercomplex SCI(1)III(2)IV(1) and megacomplex MCI(2)III(2)IV(2)). Found in a complex with TMEM177, COA6, COX18, COX20, SCO1 and SCO2. Interacts with TMEM177 in a COX20-dependent manner. Interacts with COX20. Interacts with COX16. Requires Cu cation as cofactor.

It localises to the mitochondrion inner membrane. The catalysed reaction is 4 Fe(II)-[cytochrome c] + O2 + 8 H(+)(in) = 4 Fe(III)-[cytochrome c] + 2 H2O + 4 H(+)(out). Functionally, component of the cytochrome c oxidase, the last enzyme in the mitochondrial electron transport chain which drives oxidative phosphorylation. The respiratory chain contains 3 multisubunit complexes succinate dehydrogenase (complex II, CII), ubiquinol-cytochrome c oxidoreductase (cytochrome b-c1 complex, complex III, CIII) and cytochrome c oxidase (complex IV, CIV), that cooperate to transfer electrons derived from NADH and succinate to molecular oxygen, creating an electrochemical gradient over the inner membrane that drives transmembrane transport and the ATP synthase. Cytochrome c oxidase is the component of the respiratory chain that catalyzes the reduction of oxygen to water. Electrons originating from reduced cytochrome c in the intermembrane space (IMS) are transferred via the dinuclear copper A center (CU(A)) of subunit 2 and heme A of subunit 1 to the active site in subunit 1, a binuclear center (BNC) formed by heme A3 and copper B (CU(B)). The BNC reduces molecular oxygen to 2 water molecules using 4 electrons from cytochrome c in the IMS and 4 protons from the mitochondrial matrix. This Equus asinus (Donkey) protein is Cytochrome c oxidase subunit 2 (MT-CO2).